Here is a 726-residue protein sequence, read N- to C-terminus: Catalase-peroxidase (726 aa).

Positions 90-213 form a cross-link, tryptophyl-tyrosyl-methioninium (Trp-Tyr) (with M-239); that stretch reads WHAAGTYRIG…LAAVQMGLIY (124 aa). Catalysis depends on H91, which acts as the Proton acceptor. The tryptophyl-tyrosyl-methioninium (Tyr-Met) (with W-90) cross-link spans 213–239; it reads YVNPEGPNGNPDPLAAARDIRETFARM. H254 lines the heme b pocket. The tract at residues 334–359 is disordered; the sequence is AHQWKPKHGAGANTVPDAHDPSKRHA.

It belongs to the peroxidase family. Peroxidase/catalase subfamily. As to quaternary structure, homodimer or homotetramer. Requires heme b as cofactor. In terms of processing, formation of the three residue Trp-Tyr-Met cross-link is important for the catalase, but not the peroxidase activity of the enzyme.

The enzyme catalyses H2O2 + AH2 = A + 2 H2O. It catalyses the reaction 2 H2O2 = O2 + 2 H2O. Its function is as follows. Bifunctional enzyme with both catalase and broad-spectrum peroxidase activity. This Bradyrhizobium sp. (strain BTAi1 / ATCC BAA-1182) protein is Catalase-peroxidase.